Consider the following 540-residue polypeptide: Pentatricopeptide repeat-containing protein At1g14470 (540 aa).

PPR repeat units lie at residues 70–104, 105–134, 135–165, 166–196, 197–227, 228–262, 263–297, 298–328, 330–364, 365–395, 397–431, 432–462, 463–497, and 498–528; these read NVFVVNSMFKYFSKMDMANDVLRLYEQRSRCGIMP, DAFSFPVVIKSAGRFGILFQALVEKLGFFK, DPYVRNVIMDMYVKHESVESARKVFDQISQR, KGSDWNVMISGYWKWGNKEEACKLFDMMPEN, DVVSWTVMITGFAKVKDLENARKYFDRMPEK, SVVSWNAMLSGYAQNGFTEDALRLFNDMLRLGVRP, NETTWVIVISACSFRADPSLTRSLVKLIDEKRVRL, NCFVKTALLDMHAKCRDIQSARRIFNELGTQ, NLVTWNAMISGYTRIGDMSSARQLFDTMPKRNVVS, WNSLIAGYAHNGQAALAIEFFEDMIDYGDSK, DEVTMISVLSACGHMADLELGDCIVDYIRKNQIKL, NDSGYRSLIFMYARGGNLWEAKRVFDEMKER, DVVSYNTLFTAFAANGDGVETLNLLSKMKDEGIEP, and DRVTYTSVLTACNRAGLLKEGQRIFKSIRNP.

This sequence belongs to the PPR family. PCMP-A subfamily.

In Arabidopsis thaliana (Mouse-ear cress), this protein is Pentatricopeptide repeat-containing protein At1g14470 (PCMP-A4).